Reading from the N-terminus, the 498-residue chain is ATP synthase subunit beta, chloroplastic (498 aa).

ATP is bound at residue 172-179; it reads GGAGVGKT.

It belongs to the ATPase alpha/beta chains family. In terms of assembly, F-type ATPases have 2 components, CF(1) - the catalytic core - and CF(0) - the membrane proton channel. CF(1) has five subunits: alpha(3), beta(3), gamma(1), delta(1), epsilon(1). CF(0) has four main subunits: a(1), b(1), b'(1) and c(9-12).

The protein localises to the plastid. It localises to the chloroplast thylakoid membrane. It carries out the reaction ATP + H2O + 4 H(+)(in) = ADP + phosphate + 5 H(+)(out). In terms of biological role, produces ATP from ADP in the presence of a proton gradient across the membrane. The catalytic sites are hosted primarily by the beta subunits. In Gossypium barbadense (Sea Island cotton), this protein is ATP synthase subunit beta, chloroplastic.